The primary structure comprises 65 residues: Large ribosomal subunit protein bL35 (65 aa).

Positions 1–16 are enriched in basic residues; sequence MPKQKTHRASAKRFKR. Residues 1 to 21 form a disordered region; that stretch reads MPKQKTHRASAKRFKRTGSGG.

Belongs to the bacterial ribosomal protein bL35 family.

This Streptococcus pyogenes serotype M18 (strain MGAS8232) protein is Large ribosomal subunit protein bL35.